The primary structure comprises 258 residues: Acetylglutamate kinase (258 aa).

Substrate-binding positions include Gly44–Gly45, Arg66, and Asn158. Residues Asp181–Leu186 and Ile209–Thr211 contribute to the ATP site.

It belongs to the acetylglutamate kinase family. ArgB subfamily. As to quaternary structure, homodimer.

It localises to the cytoplasm. It catalyses the reaction N-acetyl-L-glutamate + ATP = N-acetyl-L-glutamyl 5-phosphate + ADP. Its pathway is amino-acid biosynthesis; L-arginine biosynthesis; N(2)-acetyl-L-ornithine from L-glutamate: step 2/4. Catalyzes the ATP-dependent phosphorylation of N-acetyl-L-glutamate. The protein is Acetylglutamate kinase of Buchnera aphidicola subsp. Schizaphis graminum (strain Sg).